The primary structure comprises 305 residues: Acetylglutamate kinase (305 aa).

Residues 78 to 79 (GG), Arg100, and Asn202 each bind substrate.

The protein belongs to the acetylglutamate kinase family. ArgB subfamily.

The protein localises to the cytoplasm. It catalyses the reaction N-acetyl-L-glutamate + ATP = N-acetyl-L-glutamyl 5-phosphate + ADP. It functions in the pathway amino-acid biosynthesis; L-arginine biosynthesis; N(2)-acetyl-L-ornithine from L-glutamate: step 2/4. In terms of biological role, catalyzes the ATP-dependent phosphorylation of N-acetyl-L-glutamate. The polypeptide is Acetylglutamate kinase (Polaromonas sp. (strain JS666 / ATCC BAA-500)).